The chain runs to 311 residues: Porphobilinogen deaminase (311 aa).

An S-(dipyrrolylmethanemethyl)cysteine modification is found at cysteine 241.

It belongs to the HMBS family. Monomer. It depends on dipyrromethane as a cofactor.

It catalyses the reaction 4 porphobilinogen + H2O = hydroxymethylbilane + 4 NH4(+). It participates in porphyrin-containing compound metabolism; protoporphyrin-IX biosynthesis; coproporphyrinogen-III from 5-aminolevulinate: step 2/4. Functionally, tetrapolymerization of the monopyrrole PBG into the hydroxymethylbilane pre-uroporphyrinogen in several discrete steps. This is Porphobilinogen deaminase from Geobacillus sp. (strain WCH70).